Reading from the N-terminus, the 323-residue chain is tRNA-cytidine(32) 2-sulfurtransferase (323 aa).

Residues 49–54 (SGGKDS) carry the PP-loop motif motif. [4Fe-4S] cluster is bound by residues C124, C127, and C215.

The protein belongs to the TtcA family. In terms of assembly, homodimer. Mg(2+) serves as cofactor. [4Fe-4S] cluster is required as a cofactor.

Its subcellular location is the cytoplasm. It carries out the reaction cytidine(32) in tRNA + S-sulfanyl-L-cysteinyl-[cysteine desulfurase] + AH2 + ATP = 2-thiocytidine(32) in tRNA + L-cysteinyl-[cysteine desulfurase] + A + AMP + diphosphate + H(+). Its pathway is tRNA modification. Its function is as follows. Catalyzes the ATP-dependent 2-thiolation of cytidine in position 32 of tRNA, to form 2-thiocytidine (s(2)C32). The sulfur atoms are provided by the cysteine/cysteine desulfurase (IscS) system. This is tRNA-cytidine(32) 2-sulfurtransferase from Shewanella denitrificans (strain OS217 / ATCC BAA-1090 / DSM 15013).